The following is a 249-amino-acid chain: 1-(5-phosphoribosyl)-5-[(5-phosphoribosylamino)methylideneamino] imidazole-4-carboxamide isomerase (249 aa).

Residue Asp-11 is the Proton acceptor of the active site. Asp-133 acts as the Proton donor in catalysis.

This sequence belongs to the HisA/HisF family.

The protein localises to the cytoplasm. It carries out the reaction 1-(5-phospho-beta-D-ribosyl)-5-[(5-phospho-beta-D-ribosylamino)methylideneamino]imidazole-4-carboxamide = 5-[(5-phospho-1-deoxy-D-ribulos-1-ylimino)methylamino]-1-(5-phospho-beta-D-ribosyl)imidazole-4-carboxamide. The protein operates within amino-acid biosynthesis; L-histidine biosynthesis; L-histidine from 5-phospho-alpha-D-ribose 1-diphosphate: step 4/9. This chain is 1-(5-phosphoribosyl)-5-[(5-phosphoribosylamino)methylideneamino] imidazole-4-carboxamide isomerase, found in Mannheimia succiniciproducens (strain KCTC 0769BP / MBEL55E).